The following is a 72-amino-acid chain: Translation initiation factor IF-1 (72 aa).

Residues 1-72 enclose the S1-like domain; sequence MTKEEVLEFP…TKGRITYRFK (72 aa).

The protein belongs to the IF-1 family. In terms of assembly, component of the 30S ribosomal translation pre-initiation complex which assembles on the 30S ribosome in the order IF-2 and IF-3, IF-1 and N-formylmethionyl-tRNA(fMet); mRNA recruitment can occur at any time during PIC assembly.

It localises to the cytoplasm. One of the essential components for the initiation of protein synthesis. Stabilizes the binding of IF-2 and IF-3 on the 30S subunit to which N-formylmethionyl-tRNA(fMet) subsequently binds. Helps modulate mRNA selection, yielding the 30S pre-initiation complex (PIC). Upon addition of the 50S ribosomal subunit IF-1, IF-2 and IF-3 are released leaving the mature 70S translation initiation complex. This Agrobacterium fabrum (strain C58 / ATCC 33970) (Agrobacterium tumefaciens (strain C58)) protein is Translation initiation factor IF-1.